Here is a 239-residue protein sequence, read N- to C-terminus: MARLGVNIDHVATLRQARGGTEPDPVAAAAIAEFAGADGITIHLREDRRHIQDRDLKILRQTVQTRLNLEMAATDEMVAIALAVKPEACTLVPEKRAELTTEGGLDVRIHQEALKVAIEKLQAGGIIVSLFIDPDPDQIKVANKIGADYIEIHTGSFAEAKSWKEEELELIKIENAVKLARKLDLGVNAGHGLSYSNVKKVAAIGGIEEFNIGHSIMSRAILVGLDRAVRDMSELVRYA.

Asn-7 provides a ligand contact to 3-amino-2-oxopropyl phosphate. 9–10 (DH) contributes to the 1-deoxy-D-xylulose 5-phosphate binding site. 3-amino-2-oxopropyl phosphate is bound at residue Arg-18. His-43 acts as the Proton acceptor in catalysis. 1-deoxy-D-xylulose 5-phosphate is bound by residues Arg-45 and His-50. Residue Glu-70 is the Proton acceptor of the active site. Thr-100 is a 1-deoxy-D-xylulose 5-phosphate binding site. Residue His-191 is the Proton donor of the active site. Residues Gly-192 and 213 to 214 (GH) each bind 3-amino-2-oxopropyl phosphate.

It belongs to the PNP synthase family. In terms of assembly, homooctamer; tetramer of dimers.

It is found in the cytoplasm. It catalyses the reaction 3-amino-2-oxopropyl phosphate + 1-deoxy-D-xylulose 5-phosphate = pyridoxine 5'-phosphate + phosphate + 2 H2O + H(+). It participates in cofactor biosynthesis; pyridoxine 5'-phosphate biosynthesis; pyridoxine 5'-phosphate from D-erythrose 4-phosphate: step 5/5. Catalyzes the complicated ring closure reaction between the two acyclic compounds 1-deoxy-D-xylulose-5-phosphate (DXP) and 3-amino-2-oxopropyl phosphate (1-amino-acetone-3-phosphate or AAP) to form pyridoxine 5'-phosphate (PNP) and inorganic phosphate. This Citrifermentans bemidjiense (strain ATCC BAA-1014 / DSM 16622 / JCM 12645 / Bem) (Geobacter bemidjiensis) protein is Pyridoxine 5'-phosphate synthase.